A 308-amino-acid chain; its full sequence is Acetylglutamate kinase (308 aa).

Substrate-binding positions include Gly86–Gly87, Arg108, and Asn201.

It belongs to the acetylglutamate kinase family. ArgB subfamily.

Its subcellular location is the cytoplasm. The catalysed reaction is N-acetyl-L-glutamate + ATP = N-acetyl-L-glutamyl 5-phosphate + ADP. It functions in the pathway amino-acid biosynthesis; L-arginine biosynthesis; N(2)-acetyl-L-ornithine from L-glutamate: step 2/4. Its function is as follows. Catalyzes the ATP-dependent phosphorylation of N-acetyl-L-glutamate. In Prochlorococcus marinus (strain MIT 9313), this protein is Acetylglutamate kinase.